A 344-amino-acid chain; its full sequence is C-C chemokine receptor-like 2 (344 aa).

At 1 to 43 the chain is on the extracellular side; sequence MANYTLAPEDEYDVLIEGELESDEAEQCDRYDTWALSAQLVPS. Residue Asn-3 is glycosylated (N-linked (GlcNAc...) asparagine). A helical transmembrane segment spans residues 44-64; sequence LCSAVFVVGVLDNLLVVLILV. At 65-74 the chain is on the cytoplasmic side; that stretch reads KYKGLKRVEN. Residues 75–95 traverse the membrane as a helical segment; that stretch reads IYLLNLAVSNLCFLLTLPFWA. Over 96–104 the chain is Extracellular; sequence HAGGDPMCK. Cys-103 and Cys-181 are oxidised to a cystine. A helical transmembrane segment spans residues 105-125; sequence ILIGLYFVGLYSETFFNCLLT. Over 126 to 148 the chain is Cytoplasmic; the sequence is LQRYLVFLHKGNFFSVRRRVPCG. Residues 149–169 form a helical membrane-spanning segment; sequence IVTSAVAWVTAILATVPEFAV. Topologically, residues 170–198 are extracellular; that stretch reads YKPQMEDPKYKCAFSRTPFLPADETFWKH. Residues 199 to 219 traverse the membrane as a helical segment; sequence FLTLKMNVSVLVFPLFIFTFL. Residues 220 to 238 are Cytoplasmic-facing; it reads YVQMRKTLRFGEQRYSLFK. The chain crosses the membrane as a helical span at residues 239–259; the sequence is LVFAIMVVFLLMWAPYNIALF. The Extracellular portion of the chain corresponds to 260–281; sequence LSTFKEHFSLSDCKSNYNLDKS. A helical membrane pass occupies residues 282 to 302; it reads VLITKLIATTHCCVNPLLYVF. Residues 303 to 344 are Cytoplasmic-facing; sequence LDGTFRKYLCRFFHRRSNTPRQPRRRFAQGTSREEPDRSTEV. Positions 323–344 are disordered; sequence RQPRRRFAQGTSREEPDRSTEV. Residues 334–344 are compositionally biased toward basic and acidic residues; that stretch reads SREEPDRSTEV.

The protein belongs to the G-protein coupled receptor 1 family.

The protein resides in the cell membrane. Its function is as follows. Receptor for CCL19 and chemerin/RARRES2. Does not appear to be a signaling receptor, but may have a role in modulating chemokine-triggered immune responses by capturing and internalizing CCL19 or by presenting RARRES2 ligand to CMKLR1, a functional signaling receptor. Plays a critical role for the development of Th2 responses. The protein is C-C chemokine receptor-like 2 (CCRL2) of Macaca mulatta (Rhesus macaque).